A 295-amino-acid chain; its full sequence is MESSKSPSEVEKSSSASPAPQKPMIRVSKQWVVPPRPKPGRKPALDALGRRKAPIKPRPGPTSALSVEEAKFRVREKQYQDTIGKLQKENNELLEQLEMLQAQLKNSTLDSPKEVEVNSEVVKPDSATTENENRYVNQYNYPVEPPCAKNAVYTEIPIELDPHAFLGDSAKRIRVDSDSKDAKSVPSENGRIRVSMSPQNEINFTPENPAVMEKIRKRGVCNSVEGCLYSGSPKSVKRVRESEETKVYAQLLIDLHKSSKSAPMLKAGPSIAFKLPTMEPNFNDVRPVTSISSSS.

A compositionally biased stretch (low complexity) spans 1–19 (MESSKSPSEVEKSSSASPA). The segment at 1–69 (MESSKSPSEV…GPTSALSVEE (69 aa)) is disordered. A coiled-coil region spans residues 73-111 (RVREKQYQDTIGKLQKENNELLEQLEMLQAQLKNSTLDS). A Nuclear export signal motif is present at residues 93-100 (LLEQLEML). Residues 108–130 (TLDSPKEVEVNSEVVKPDSATTE) are disordered.

As to quaternary structure, component of tha CCAAT-binding complex composed of at least php2, php3, php4 and php5. Interacts with crm1 and grx4.

The protein resides in the cytoplasm. It is found in the nucleus. Its subcellular location is the cytoskeleton. It localises to the spindle pole. Functionally, component of the transcription regulatory CCAAT-binding complex. Required for the reprogramming of the cell for iron use. Down-regulates pcl1, sdh4, and isa1 underlow-iron conditions. The polypeptide is CCAAT-binding factor complex subunit php4 (php4) (Schizosaccharomyces pombe (strain 972 / ATCC 24843) (Fission yeast)).